The chain runs to 241 residues: tRNA pseudouridine synthase A (241 aa).

The active-site Nucleophile is Asp52. Tyr110 contacts substrate.

Belongs to the tRNA pseudouridine synthase TruA family. Homodimer.

It carries out the reaction uridine(38/39/40) in tRNA = pseudouridine(38/39/40) in tRNA. Its function is as follows. Formation of pseudouridine at positions 38, 39 and 40 in the anticodon stem and loop of transfer RNAs. In Aquifex aeolicus (strain VF5), this protein is tRNA pseudouridine synthase A.